Reading from the N-terminus, the 1182-residue chain is Tyrosine-protein kinase ABL2 (1182 aa).

The disordered stretch occupies residues 1 to 42; the sequence is MGQQVGRVGEAPGLQQPQPRGIRGSSAARPSGRRRDPAGRTA. Gly2 carries the N-myristoyl glycine lipid modification. A CAP region spans residues 2-106; that stretch reads GQQVGRVGEA…SKENLLGATE (105 aa). Over residues 20-30 the composition is skewed to low complexity; sequence RGIRGSSAARP. Ser97 is subject to Phosphoserine. Positions 107–167 constitute an SH3 domain; the sequence is SDPNLFVALY…PSNYITPVNS (61 aa). A phosphotyrosine mark is found at Tyr116, Tyr161, Tyr174, Tyr185, Tyr218, and Tyr231. The 91-residue stretch at 173-263 folds into the SH2 domain; it reads WYHGPVSRSA…GLVTTLHYPA (91 aa). Phosphotyrosine; by ABL1 and autocatalysis is present on Tyr261. A Phosphotyrosine; by autocatalysis modification is found at Tyr272. Ser275 is modified (phosphoserine). A Protein kinase domain is found at 288-539; that stretch reads ITMKHKLGGG…PSFAETHQAF (252 aa). 294–302 serves as a coordination point for ATP; it reads LGGGQYGEV. Phosphotyrosine is present on residues Tyr299 and Tyr303. ATP contacts are provided by residues Lys317 and 362 to 368; that span reads EYMPYGN. Asp409 (proton acceptor) is an active-site residue. Residues 427–451 carry the Kinase activation loop motif; sequence DFGLSRLMTGDTYTAHAGAKFPIKW. A Phosphotyrosine; by autocatalysis and SRC-type Tyr-kinases modification is found at Tyr439. Phosphotyrosine is present on Tyr459. Position 568 is a phosphotyrosine; by autocatalysis (Tyr568). Ser606, Ser621, Ser632, Ser634, and Ser656 each carry phosphoserine. 2 disordered regions span residues 612 to 642 and 655 to 674; these read IRST…DAKE and SSFM…SSFR. The Nuclear localization signal motif lies at 659 to 661; it reads KKR. Phosphoserine occurs at positions 670, 671, and 672. Tyr684 carries the phosphotyrosine; by autocatalysis modification. An F-actin-binding region spans residues 695–930; the sequence is SLQNADGFSV…AVLPTTHNHK (236 aa). Tyr719 is modified (phosphotyrosine). Residues 765–796 are disordered; sequence LRAGKPTASDDTSKPFPRSNSTSSMSSGLPEQ. N6-acetyllysine is present on Lys778. The segment covering 782-793 has biased composition (polar residues); it reads RSNSTSSMSSGL. A Phosphoserine modification is found at Ser785. Thr802 bears the Phosphothreonine mark. The span at 809 to 825 shows a compositional bias: polar residues; sequence RSKLQLERTVSTSSQPE. Residues 809-858 are disordered; it reads RSKLQLERTVSTSSQPEENVDRANDMLPKKSEEGAAPARERPKAKLLPRG. Ser819 and Ser822 each carry phosphoserine. A compositionally biased stretch (basic and acidic residues) spans 827–851; that stretch reads NVDRANDMLPKKSEEGAAPARERPK. Phosphoserine occurs at positions 915 and 936. The tract at residues 964–1059 is disordered; that stretch reads HQVTSSGDKD…TSSISPAKMA (96 aa). The interval 1020 to 1182 is F-actin-binding; the sequence is EGGKKAAPGP…VQEISDVVQR (163 aa).

It belongs to the protein kinase superfamily. Tyr protein kinase family. ABL subfamily. Interacts with PSMA7. Interacts with CTTN. Found in a complex with ABL1, ABL2, CRK and UNC119; leading to the inhibition of CRK phosphorylation by ABL kinases. Mg(2+) serves as cofactor. The cofactor is Mn(2+). Post-translationally, phosphorylated at Tyr-261 by ABL1 in response to oxidative stress. Phosphorylated by PDGFRB. Polyubiquitinated. Polyubiquitination of ABL2 leads to degradation. As to expression, most abundant in adult mouse brain, especially in synapse-rich regions.

It localises to the cytoplasm. It is found in the cytoskeleton. It carries out the reaction L-tyrosyl-[protein] + ATP = O-phospho-L-tyrosyl-[protein] + ADP + H(+). Stabilized in the inactive form by an association between the SH3 domain and the SH2-TK linker region, interactions of the N-terminal cap, and contributions from an N-terminal myristoyl group and phospholipids. Activated by autophosphorylation as well as by SRC-family kinase-mediated phosphorylation. Activated by RIN1 binding to the SH2 and SH3 domains. Inhibited by imatinib mesylate (Gleevec). Phosphatidylinositol 4,5-bisphosphate (PIP2), a highly abundant phosphoinositide known to regulate cytoskeletal and membrane proteins, inhibits the tyrosine kinase activity. Its function is as follows. Non-receptor tyrosine-protein kinase that plays an ABL1-overlapping role in key processes linked to cell growth and survival such as cytoskeleton remodeling in response to extracellular stimuli, cell motility and adhesion, receptor endocytosis, autophagy, DNA damage response and apoptosis. Coordinates actin remodeling through tyrosine phosphorylation of proteins controlling cytoskeleton dynamics like MYH10 (involved in movement); CTTN (involved in signaling); or TUBA1 and TUBB (microtubule subunits). Binds directly F-actin and regulates actin cytoskeletal structure through its F-actin-bundling activity. Involved in the regulation of cell adhesion and motility through phosphorylation of key regulators of these processes such as CRK, CRKL or DOK1. Required for adhesion-dependent phosphorylation of ARHGAP35 which promotes its association with RASA1, resulting in recruitment of ARHGAP35 to the cell periphery where it inhibits RHO. Phosphorylates multiple receptor tyrosine kinases like PDGFRB and other substrates which are involved in endocytosis regulation such as RIN1. In brain, may regulate neurotransmission by phosphorylating proteins at the synapse. Finally, functions as its own regulator through autocatalytic activity as well as through phosphorylation of its inhibitor, ABI1. Positively regulates chemokine-mediated T-cell migration, polarization, and homing to lymph nodes and immune-challenged tissues, potentially via activation of NEDD9/HEF1 and RAP1. This Mus musculus (Mouse) protein is Tyrosine-protein kinase ABL2.